A 782-amino-acid polypeptide reads, in one-letter code: Lysosome membrane protein 2-C (782 aa).

Over 1-7 (MVANNKG) the chain is Cytoplasmic. The helical transmembrane segment at 8 to 28 (LLIAGLLLSVIGAALFVISLA) threads the bilayer. Over 29–739 (LLPSVLNVAT…QQFKQIQTVK (711 aa)) the chain is Lumenal. 22 N-linked (GlcNAc...) asparagine glycosylation sites follow: N77, N105, N191, N219, N234, N243, N281, N368, N387, N401, N427, N432, N451, N465, N501, N536, N540, N595, N605, N613, N646, and N692. A helical transmembrane segment spans residues 740–760 (IAPVVVVSIFGGILLIAGLVM). Topologically, residues 761 to 782 (AINGFRKTFYNNNQYNGYNIIN) are cytoplasmic. Positions 777–781 (GYNII) match the Tyrosine-type lysosomal sorting signal motif.

It belongs to the CD36 family. Post-translationally, heavily glycosylated.

Its subcellular location is the lysosome membrane. Functionally, may act as a lysosomal receptor. May be involved role in macropinocytosis and fluid phase exocytosis. The protein is Lysosome membrane protein 2-C (lmpC) of Dictyostelium discoideum (Social amoeba).